A 271-amino-acid polypeptide reads, in one-letter code: MNIKQVDEIKITRYILKATFEDWMDFSVNDVVIVGAGPSGLAAAYYSAKAGLKTTVFERRLSFGGGIGGGAMLFHKIVIESPADEILREIGVKLQKFEEGVYVVDSSEFMAKLAAATIDAGAKIIHGVTVDDVIFRENPLRVTGVAVEWTATQMASLHVDPLFISAKAVVDATGHDAEVISVASRKIPELGIVIPGEKSAYSEIAEQLTVEQSGEVAPGLYAAGMAVTEIKAIPRMGPIFGAMLLSGKKVAEDIIKNLQANSATLKSVQKE.

NAD(+) is bound by residues Ser-39, 58–59 (ER), Gly-66, Val-130, and 158–160 (HVD). Fe cation contacts are provided by Asp-160 and His-175. Met-225 provides a ligand contact to NAD(+). Position 235 (Arg-235) interacts with glycine.

The protein belongs to the THI4 family. As to quaternary structure, homooctamer; tetramer of dimers. It depends on Fe(2+) as a cofactor.

The catalysed reaction is hydrogen sulfide + glycine + NAD(+) = ADP-5-ethyl-4-methylthiazole-2-carboxylate + nicotinamide + 3 H2O + H(+). It participates in cofactor biosynthesis; thiamine diphosphate biosynthesis. Involved in the biosynthesis of the thiazole moiety of thiamine. Catalyzes the conversion of NAD and glycine to adenosine diphosphate 5-(2-hydroxyethyl)-4-methylthiazole-2-carboxylate (ADT), an adenylated thiazole intermediate, using free sulfide as a source of sulfur. In Metallosphaera sedula (strain ATCC 51363 / DSM 5348 / JCM 9185 / NBRC 15509 / TH2), this protein is Thiamine thiazole synthase.